The following is a 591-amino-acid chain: L-fucose isomerase (591 aa).

Residues glutamate 337 and aspartate 361 each act as proton acceptor in the active site. Glutamate 337, aspartate 361, and histidine 528 together coordinate Mn(2+).

The protein belongs to the L-fucose isomerase family. As to quaternary structure, homohexamer. Requires Mn(2+) as cofactor.

The protein resides in the cytoplasm. It carries out the reaction L-fucose = L-fuculose. It participates in carbohydrate degradation; L-fucose degradation; L-lactaldehyde and glycerone phosphate from L-fucose: step 1/3. Converts the aldose L-fucose into the corresponding ketose L-fuculose. This Salmonella paratyphi A (strain ATCC 9150 / SARB42) protein is L-fucose isomerase.